Consider the following 155-residue polypeptide: Ribosomal RNA large subunit methyltransferase H (155 aa).

S-adenosyl-L-methionine-binding positions include Leu72, Gly103, and 122-127 (LSALTL).

It belongs to the RNA methyltransferase RlmH family. In terms of assembly, homodimer.

The protein localises to the cytoplasm. It carries out the reaction pseudouridine(1915) in 23S rRNA + S-adenosyl-L-methionine = N(3)-methylpseudouridine(1915) in 23S rRNA + S-adenosyl-L-homocysteine + H(+). Functionally, specifically methylates the pseudouridine at position 1915 (m3Psi1915) in 23S rRNA. The polypeptide is Ribosomal RNA large subunit methyltransferase H (Salmonella dublin (strain CT_02021853)).